We begin with the raw amino-acid sequence, 506 residues long: WD repeat-containing protein 55 homolog (506 aa).

The segment covering 1 to 11 (MHRHDCFKTPA) has biased composition (basic and acidic residues). Disordered stretches follow at residues 1–20 (MHRH…DDID), 33–87 (QEVL…SDDS), and 100–132 (AKRR…DEDD). Residues 33 to 48 (QEVLNESESDDDEYDL) are compositionally biased toward acidic residues. Residues 61–74 (GNISSNESISSDGS) show a composition bias toward low complexity. Over residues 78–87 (NAEDTDSDDS) the composition is skewed to acidic residues. 6 WD repeats span residues 156–195 (RLED…NKLL), 200–239 (VHAK…LKKL), 243–281 (AHDD…AIFE), 284–323 (EVED…LYVQ), 326–365 (PYEE…YHCD), and 410–449 (QHNM…DFGD). A disordered region spans residues 480 to 506 (DMTKEQDDDDNDDGGNNTTAAGSNNVT). Positions 493–506 (GGNNTTAAGSNNVT) are enriched in low complexity.

This sequence belongs to the WD repeat WDR55 family.

This is WD repeat-containing protein 55 homolog from Drosophila mojavensis (Fruit fly).